A 1674-amino-acid chain; its full sequence is E3 ubiquitin-protein ligase SHPRH (1674 aa).

The interval 1–26 (MSSRRKRAPPMKVDEERQQQLHWNMH) is disordered. A compositionally biased stretch (basic and acidic residues) spans 12-26 (KVDEERQQQLHWNMH). Phosphoserine occurs at positions 259 and 261. A Helicase ATP-binding; first part domain is found at 302 to 384 (YQREAVNWML…TVEVLALILT (83 aa)). ATP is bound at residue 368–375 (DEMGLGKT). In terms of domain architecture, H15 spans 433-507 (HCPPTRVMIL…GFSGTFTLGK (75 aa)). Positions 524 to 548 (SPRKIEKELRKSVNKDADSEYLPSN) are disordered. The span at 526–541 (RKIEKELRKSVNKDAD) shows a compositional bias: basic and acidic residues. At Ser626 the chain carries Phosphoserine. The segment at 649-700 (RFECICGEFDQIGHKPRVQCLKCHLWQHAKCVNYEEKNLKVKPFYCPHCLVA) adopts a PHD-type zinc-finger fold. The Helicase ATP-binding; second part domain occupies 701-859 (MEPVSTRATL…FGLVVFLGIE (159 aa)). A DEAQ box motif is present at residues 810-813 (DEAQ). The segment at 1423 to 1470 (CPICARQLGKQWAVLTCGHCFCNECTSIIIEQYSVGSHRSSIKCAICR) adopts an RING-type zinc-finger fold. The region spanning 1505–1663 (AVVRTLMKIQ…ASVLTVAGLA (159 aa)) is the Helicase C-terminal domain.

The protein belongs to the SNF2/RAD54 helicase family. As to quaternary structure, homodimer. Interacts with HLTF, PCNA, UBE2N and RAD18. Broadly expressed (at protein level).

The catalysed reaction is S-ubiquitinyl-[E2 ubiquitin-conjugating enzyme]-L-cysteine + [acceptor protein]-L-lysine = [E2 ubiquitin-conjugating enzyme]-L-cysteine + N(6)-ubiquitinyl-[acceptor protein]-L-lysine.. Its pathway is protein modification; protein ubiquitination. Functionally, E3 ubiquitin-protein ligase involved in DNA repair. Upon genotoxic stress, accepts ubiquitin from the UBE2N-UBE2V2 E2 complex and transfers it to 'Lys-164' of PCNA which had been monoubiquitinated by UBE2A/B-RAD18, promoting the formation of non-canonical poly-ubiquitin chains linked through 'Lys-63'. This chain is E3 ubiquitin-protein ligase SHPRH (Shprh), found in Mus musculus (Mouse).